We begin with the raw amino-acid sequence, 406 residues long: 5-cytosine rRNA methyltransferase NSUN4 (406 aa).

Positions 207, 208, 209, 226, 231, 259, 260, and 277 each coordinate S-adenosyl-L-methionine. Catalysis depends on C332, which acts as the Nucleophile.

Belongs to the class I-like SAM-binding methyltransferase superfamily. RsmB/NOP family.

It is found in the mitochondrion. The enzyme catalyses a cytidine in rRNA + S-adenosyl-L-methionine = a 5-methylcytidine in rRNA + S-adenosyl-L-homocysteine + H(+). It carries out the reaction a cytidine in mRNA + S-adenosyl-L-methionine = a 5-methylcytidine in mRNA + S-adenosyl-L-homocysteine + H(+). Its function is as follows. Involved in mitochondrial ribosome large subunit biogenesis. Mitochondrial RNA cytosine C(5)-methyltransferase that methylates cytosine to 5-methylcytosine (m5C) in various RNAs, such as rRNAs, mRNAs and some long non-coding RNAs (lncRNAs). Involved in mitochondrial ribosome small subunit (SSU) maturation by catalyzing methylation of mitochondrial 12S rRNA. The chain is 5-cytosine rRNA methyltransferase NSUN4 (nsun4) from Xenopus tropicalis (Western clawed frog).